Here is a 323-residue protein sequence, read N- to C-terminus: Ankyrin repeat and SOCS box protein 11 (323 aa).

ANK repeat units follow at residues 64–93 (ADRS…NVNL), 97–126 (NRVS…HVNG), 130–159 (HGAT…KAQL), 162–191 (HLAS…NIDH), 195–224 (QLGT…SVDH), and 227–256 (WLDT…NLKR). Residues 273 to 323 (SVEQALLLREGPPALSQLCRLCVRKCLGRACHQAIHKLHLPEPLERFLLYQ) form the SOCS box domain.

Belongs to the ankyrin SOCS box (ASB) family. Substrate-recognition component of the ECS(ASB11) complex, composed of ASB11, CUL5, ELOB, ELOC and RNF7/RBX2.

It localises to the endoplasmic reticulum. The protein operates within protein modification; protein ubiquitination. Functionally, substrate-recognition component of a cullin-5-RING E3 ubiquitin-protein ligase complex (ECS complex, also named CRL5 complex), which mediates the ubiquitination and subsequent proteasomal degradation of target proteins, such as BIK, DIRAS2 and RPN1. The ECS(ASB11) complex acts as a regulator of the endoplasmic reticulum unfolded protein response by mediating ubiquitination and degradation of BIK. The sequence is that of Ankyrin repeat and SOCS box protein 11 from Homo sapiens (Human).